The following is a 564-amino-acid chain: Putative ABC transporter ATP-binding protein PBPRA2240 (564 aa).

2 consecutive ABC transporter domains span residues 3–244 (IEFS…GIRE) and 299–533 (LTVN…ANLT). Residues 37–44 (GPSGSGKS) and 332–339 (GKNGSGKS) each bind ATP.

It belongs to the ABC transporter superfamily.

The protein resides in the cell inner membrane. Probably part of an ABC transporter complex. Responsible for energy coupling to the transport system. In Photobacterium profundum (strain SS9), this protein is Putative ABC transporter ATP-binding protein PBPRA2240.